The primary structure comprises 447 residues: Phosphoglucosamine mutase (447 aa).

S104 functions as the Phosphoserine intermediate in the catalytic mechanism. Mg(2+) contacts are provided by S104, D243, D245, and D247. S104 is modified (phosphoserine).

The protein belongs to the phosphohexose mutase family. It depends on Mg(2+) as a cofactor. In terms of processing, activated by phosphorylation.

It catalyses the reaction alpha-D-glucosamine 1-phosphate = D-glucosamine 6-phosphate. Catalyzes the conversion of glucosamine-6-phosphate to glucosamine-1-phosphate. This Corynebacterium jeikeium (strain K411) protein is Phosphoglucosamine mutase.